Reading from the N-terminus, the 519-residue chain is PTS system mannitol-specific EIICB component (519 aa).

Residues 1-30 (MAQTETQEKKGLGRKVQAFGSFLSSMIMPN) are Cytoplasmic-facing. Residues 19–351 (FGSFLSSMIM…MKFTKEPKQD (333 aa)) enclose the PTS EIIC type-2 domain. The helical transmembrane segment at 31–52 (IGAFIAWGFIAAIFIDNGWYPN) threads the bilayer. The Extracellular portion of the chain corresponds to 53-56 (KELS). The helical transmembrane segment at 57–77 (QLAGPMITYLIPLLIAFSGGR) threads the bilayer. At 78 to 141 (LIHDLRGGIV…QGFEMLFNNF (64 aa)) the chain is on the cytoplasmic side. A helical membrane pass occupies residues 142–163 (SAGILAFIMTILGFKLLAPIMQ). At 164-172 (FIMHILSVA) the chain is on the extracellular side. The chain crosses the membrane as a helical span at residues 173–193 (VEFLVHLHLLPIVSIIVEPAK). At 194-280 (ILFLNNAINH…VLMRPLLFIA (87 aa)) the chain is on the cytoplasmic side. The helical transmembrane segment at 281-300 (VILGGMTGVATYQATGFGFK) threads the bilayer. Topologically, residues 301 to 320 (SPASPGSFIVYCLNAPKGEF) are extracellular. Residues 321–342 (LHMVLGVFLAALVSFVVAALIM) traverse the membrane as a helical segment. The Cytoplasmic segment spans residues 343-519 (KFTKEPKQDL…NNLKKDQDKA (177 aa)). Residues 366–406 (KSSVSSKLTGATTGTGAAGVAANKANGEDQNEASSEDEEED) are disordered. Residues 367–387 (SSVSSKLTGATTGTGAAGVAA) show a composition bias toward low complexity. The span at 394-406 (DQNEASSEDEEED) shows a compositional bias: acidic residues. Residues 425-519 (DHVIFACDAG…NNLKKDQDKA (95 aa)) enclose the PTS EIIB type-2 domain. Cys431 acts as the Phosphocysteine intermediate; for EIIB activity in catalysis. Cys431 carries the post-translational modification Phosphocysteine; by EIIA.

In terms of assembly, homodimer.

Its subcellular location is the cell membrane. The enzyme catalyses D-mannitol(out) + N(pros)-phospho-L-histidyl-[protein] = D-mannitol 1-phosphate(in) + L-histidyl-[protein]. Functionally, the phosphoenolpyruvate-dependent sugar phosphotransferase system (sugar PTS), a major carbohydrate active transport system, catalyzes the phosphorylation of incoming sugar substrates concomitantly with their translocation across the cell membrane. The enzyme II CmtAB PTS system is involved in D-mannitol transport. The sequence is that of PTS system mannitol-specific EIICB component (mtlA) from Staphylococcus haemolyticus (strain JCSC1435).